We begin with the raw amino-acid sequence, 137 residues long: Cucumber peeling cupredoxin (137 aa).

Position 1 is a pyrrolidone carboxylic acid (glutamine 1). The 105-residue stretch at threonine 3–alanine 107 folds into the Phytocyanin domain. Residues histidine 46, cysteine 89, histidine 94, and glutamine 99 each contribute to the Cu cation site. A disulfide bridge connects residues cysteine 60 and cysteine 95. Asparagine 109 carries an N-linked (GlcNAc...) asparagine glycan. The tract at residues valine 112 to serine 137 is disordered. A compositionally biased stretch (pro residues) spans methionine 114–serine 137. Proline 115 bears the 4-hydroxyproline; partial mark. 4 positions are modified to 4-hydroxyproline: proline 116, proline 117, proline 121, and proline 122. The residue at position 127 (proline 127) is a 4-hydroxyproline; partial. Proline 128, proline 129, proline 133, proline 134, and proline 136 each carry 4-hydroxyproline.

The polypeptide is Cucumber peeling cupredoxin (Cucumis sativus (Cucumber)).